Consider the following 314-residue polypeptide: Serine hydrolase-like protein 2 (314 aa).

The region spanning 33-293 (PPVLCLHGWL…GNHCVHMSEP (261 aa)) is the AB hydrolase-1 domain. Serine 108 is an active-site residue.

Belongs to the AB hydrolase superfamily.

It localises to the cytoplasm. The protein resides in the perinuclear region. Its subcellular location is the peroxisome. Functionally, probable serine hydrolase. May be related to cell muscle hypertrophy. The polypeptide is Serine hydrolase-like protein 2 (SERHL2) (Homo sapiens (Human)).